The chain runs to 337 residues: Phospholipase A1 1 (337 aa).

The signal sequence occupies residues Met-1 to Ala-21. The propeptide occupies Ala-22–Arg-35. Cys-41 and Cys-124 are joined by a disulfide. The active-site Nucleophile is Ser-174. The active-site Charge relay system is Asp-202. Intrachain disulfides connect Cys-213–Cys-218 and Cys-256–Cys-261. His-263 functions as the Charge relay system in the catalytic mechanism. Disulfide bonds link Cys-278–Cys-305, Cys-279–Cys-330, and Cys-298–Cys-303.

The protein belongs to the AB hydrolase superfamily. Lipase family. Expressed by the venom gland.

It localises to the secreted. It catalyses the reaction a 1,2-diacyl-sn-glycero-3-phosphocholine + H2O = a 2-acyl-sn-glycero-3-phosphocholine + a fatty acid + H(+). Functionally, catalyzes the hydrolysis of phosphatidylcholine with phospholipase A1 activity. May act as an allergen and induce hemolytic activity. The chain is Phospholipase A1 1 from Polistes dominula (European paper wasp).